A 376-amino-acid polypeptide reads, in one-letter code: Hydroxylysine kinase (376 aa).

The active-site Proton acceptor is the aspartate 229.

The protein belongs to the aminoglycoside phosphotransferase family.

The protein resides in the cytoplasm. It carries out the reaction (5R)-5-hydroxy-L-lysine + GTP = (5R)-5-phosphooxy-L-lysine + GDP + H(+). Catalyzes the GTP-dependent phosphorylation of 5-hydroxy-L-lysine. In Bos taurus (Bovine), this protein is Hydroxylysine kinase (HYKK).